The primary structure comprises 611 residues: Autophagy-related protein 22-2 (611 aa).

Residues 1-24 are disordered; the sequence is MRADDNPSARSLHAQFPGDDTRPT. The helical transmembrane segment at 35 to 55 threads the bilayer; the sequence is YGWAAEVFTVCAMGSFLPITL. An N-linked (GlcNAc...) asparagine glycan is attached at N78. The next 3 membrane-spanning stretches (helical) occupy residues 116-136, 151-171, and 175-195; these read TASF…VLII, LLVA…SVVP, and IVGA…FVLL. The N-linked (GlcNAc...) asparagine glycan is linked to N221. A run of 2 helical transmembrane segments spans residues 286-306 and 316-336; these read IGIG…VIIA and LVLF…ALWL. An N-linked (GlcNAc...) asparagine glycan is attached at N353. The next 6 helical transmembrane spans lie at 380 to 400, 414 to 434, 449 to 469, 483 to 503, 521 to 541, and 551 to 571; these read ILLF…VSGT, AALG…AFSW, IIAC…GFVP, WEMF…SSYC, ALYA…VGLI, and AFVF…LVDV.

It belongs to the ATG22 family.

It is found in the vacuole membrane. In terms of biological role, vacuolar effluxer which mediate the efflux of amino acids resulting from autophagic degradation. The release of autophagic amino acids allows the maintenance of protein synthesis and viability during nitrogen starvation. This is Autophagy-related protein 22-2 (atg22-2) from Aspergillus clavatus (strain ATCC 1007 / CBS 513.65 / DSM 816 / NCTC 3887 / NRRL 1 / QM 1276 / 107).